The primary structure comprises 65 residues: Large ribosomal subunit protein uL29 (65 aa).

This sequence belongs to the universal ribosomal protein uL29 family.

This is Large ribosomal subunit protein uL29 from Dehalococcoides mccartyi (strain ATCC BAA-2266 / KCTC 15142 / 195) (Dehalococcoides ethenogenes (strain 195)).